We begin with the raw amino-acid sequence, 306 residues long: MRVVFMGTPEFSVPILTAIIGHGYEVVAAYTQPPRPAGRRGLELTRSPVHEKAEQFGIPVFTPKSLKGAEEQDVFASLEADVAIVVAYGLLLPKAILDAPRLGCYNGHASLLPRWRGAAPIQRAIMAGDAETGMMIMKMDEGLDTGPVAMAEKVAITPDMTAGELHDRLSMIGADLMIRALGALERESLALQPQAEEGVTYAAKIDKAEARIDWSKPAKDVHNSIRGLSPFPGAWCEMEINGAVERVKLQRSTLGEGSGAPGTVLDDRLTIACGEGAVRLATLQRSGGKPLPAQEFLRGQRVTKVL.

110 to 113 (SLLP) lines the (6S)-5,6,7,8-tetrahydrofolate pocket.

It belongs to the Fmt family.

The enzyme catalyses L-methionyl-tRNA(fMet) + (6R)-10-formyltetrahydrofolate = N-formyl-L-methionyl-tRNA(fMet) + (6S)-5,6,7,8-tetrahydrofolate + H(+). Functionally, attaches a formyl group to the free amino group of methionyl-tRNA(fMet). The formyl group appears to play a dual role in the initiator identity of N-formylmethionyl-tRNA by promoting its recognition by IF2 and preventing the misappropriation of this tRNA by the elongation apparatus. This Brucella suis biovar 1 (strain 1330) protein is Methionyl-tRNA formyltransferase.